A 201-amino-acid chain; its full sequence is TATA-box-binding protein 2 (201 aa).

A run of 2 repeats spans residues 26-102 and 116-193.

This sequence belongs to the TBP family. In terms of assembly, belongs to the TFIID complex together with the TBP-associated factors (TAFs). Binds DNA as monomer.

The protein resides in the nucleus. In terms of biological role, general transcription factor that functions at the core of the DNA-binding multiprotein factor TFIID. Binding of TFIID to the TATA box is the initial transcriptional step of the pre-initiation complex (PIC), playing a role in the activation of eukaryotic genes transcribed by RNA polymerase II. The sequence is that of TATA-box-binding protein 2 (TBP2) from Triticum aestivum (Wheat).